Consider the following 252-residue polypeptide: Phosphate import ATP-binding protein PstB (252 aa).

One can recognise an ABC transporter domain in the interval 6-247; the sequence is MSIRDLNFYY…PAQKATEDYI (242 aa). 38–45 contacts ATP; sequence GPSGCGKS.

The protein belongs to the ABC transporter superfamily. Phosphate importer (TC 3.A.1.7) family. In terms of assembly, the complex is composed of two ATP-binding proteins (PstB), two transmembrane proteins (PstC and PstA) and a solute-binding protein (PstS).

It localises to the cell inner membrane. The enzyme catalyses phosphate(out) + ATP + H2O = ADP + 2 phosphate(in) + H(+). In terms of biological role, part of the ABC transporter complex PstSACB involved in phosphate import. Responsible for energy coupling to the transport system. In Psychrobacter cryohalolentis (strain ATCC BAA-1226 / DSM 17306 / VKM B-2378 / K5), this protein is Phosphate import ATP-binding protein PstB.